A 437-amino-acid polypeptide reads, in one-letter code: Bystin (437 aa).

Residues 1-105 are disordered; the sequence is MPKFKAARGV…DGSDDEDEEW (105 aa). Arg-40 is subject to Omega-N-methylarginine. At Ser-55 the chain carries Phosphoserine. Positions 71–87 are enriched in basic and acidic residues; it reads AEHGTGDKPAAPRERTT. Ser-98 carries the post-translational modification Phosphoserine. A Phosphothreonine modification is found at Thr-156. Residues Ser-167 and Ser-414 each carry the phosphoserine modification.

The protein belongs to the bystin family. As to quaternary structure, binds trophinin, tastin and cytokeratins. Found in the placenta from the sixth week of pregnancy. Was localized in the cytoplasm of the syncytiotrophoblast in the chorionic villi and in endometrial decidual cells at the uteroplacental interface. After week 10, the level decreased and then disappeared from placental villi.

It is found in the cytoplasm. The protein localises to the nucleus. Its subcellular location is the nucleolus. Functionally, required for processing of 20S pre-rRNA precursor and biogenesis of 40S ribosomal subunits. May be required for trophinin-dependent regulation of cell adhesion during implantation of human embryos. In Homo sapiens (Human), this protein is Bystin.